Here is a 444-residue protein sequence, read N- to C-terminus: Phosphoglucosamine mutase (444 aa).

Ser104 (phosphoserine intermediate) is an active-site residue. Positions 104, 243, 245, and 247 each coordinate Mg(2+). Ser104 bears the Phosphoserine mark.

Belongs to the phosphohexose mutase family. It depends on Mg(2+) as a cofactor. Activated by phosphorylation.

It carries out the reaction alpha-D-glucosamine 1-phosphate = D-glucosamine 6-phosphate. In terms of biological role, catalyzes the conversion of glucosamine-6-phosphate to glucosamine-1-phosphate. In Neisseria meningitidis serogroup C (strain 053442), this protein is Phosphoglucosamine mutase.